Consider the following 255-residue polypeptide: Diphthine synthase (255 aa).

Residues leucine 9, aspartate 85, valine 88, 113 to 114 (SI), leucine 164, alanine 207, and histidine 232 each bind S-adenosyl-L-methionine.

It belongs to the diphthine synthase family. As to quaternary structure, homodimer.

It catalyses the reaction 2-[(3S)-amino-3-carboxypropyl]-L-histidyl-[translation elongation factor 2] + 3 S-adenosyl-L-methionine = diphthine-[translation elongation factor 2] + 3 S-adenosyl-L-homocysteine + 3 H(+). It functions in the pathway protein modification; peptidyl-diphthamide biosynthesis. Functionally, S-adenosyl-L-methionine-dependent methyltransferase that catalyzes the trimethylation of the amino group of the modified target histidine residue in translation elongation factor 2 (EF-2), to form an intermediate called diphthine. The three successive methylation reactions represent the second step of diphthamide biosynthesis. This Methanococcus maripaludis (strain C7 / ATCC BAA-1331) protein is Diphthine synthase.